The following is a 157-amino-acid chain: Hydra actinoporin-like toxin 3 (157 aa).

A signal peptide spans 1–14 (LEATVSRNKKYKFT). The Cell attachment site signature appears at 129–131 (IAG).

It belongs to the actinoporin family. HALT subfamily. Octamer or nonamer in membranes. Monomer in the soluble state. In vitro, interacts with folate receptor alpha (of target organism).

The protein resides in the nematocyst. Its subcellular location is the secreted. The protein localises to the target cell membrane. Pore-forming protein that forms hydrophilic pores and causes cytolysis. Compared to equinatoxin-2 (AC P61914), it reveals lower cytolysis activity (5-12-fold difference, tested on erythrocytes), a larger pore size (probably 2-3 nm) and different affinity to membrane lipids (100-fold lower affinity to sphingomyelin). Binds to the two sphingolipids, lysophosphatidic acid (LPA) and sphingosine-1-phosphate (S1P). Does not bind (or only weakly) to sulfatides (SFT). Shows cytolytic activity on HeLa cells, with a different potency than its paralogs (from most potent to less potent: HALT-4&gt;HALT-6~HALT-1&gt;HALT-3&gt;HALT-7&gt;HALT-2). Pore formation is a multi-step process that involves specific recognition of membrane lipid by a protein aromatic residues rich region, firm binding to the membrane (mainly driven by hydrophobic interactions) accompanied by the transfer of the N-terminal region to the lipid-water interface and finally pore formation after oligomerization of monomers. In vitro, binds to the folate receptor alpha (FOLR1), a GPI-anchored membrane protein that plays a major role in the uptake of folate/folic acid into cells via endocytosis, suggesting a possible involvement of this receptor in the mechanism of HALT-1-induced cell lysis. In vivo, does not cause visible paralysis in larvae of the blowfly Sarcophaga faculata, the most common arthropod prey of Hydra. The sequence is that of Hydra actinoporin-like toxin 3 from Hydra vulgaris (Hydra).